Reading from the N-terminus, the 98-residue chain is Large ribosomal subunit protein uL23 (98 aa).

Belongs to the universal ribosomal protein uL23 family. Part of the 50S ribosomal subunit. Contacts protein L29, and trigger factor when it is bound to the ribosome.

Its function is as follows. One of the early assembly proteins it binds 23S rRNA. One of the proteins that surrounds the polypeptide exit tunnel on the outside of the ribosome. Forms the main docking site for trigger factor binding to the ribosome. The polypeptide is Large ribosomal subunit protein uL23 (Rickettsia canadensis (strain McKiel)).